A 401-amino-acid chain; its full sequence is Jumonji C domain-containing protein 5 (401 aa).

One can recognise a JmjC domain in the interval 255–401 (EYLAQHELFA…PSFSVSFWWE (147 aa)). Residues His-306, Asp-308, and His-385 each coordinate Fe cation.

Requires Fe(2+) as cofactor. In terms of tissue distribution, expressed in neurons close to the dorsal lateral neurons involved in circadian rhythm.

The protein resides in the nucleus. It is found in the nucleoplasm. It localises to the cytoplasm. It carries out the reaction L-arginyl-[protein] + 2-oxoglutarate + O2 = (3R)-3-hydroxy-L-arginyl-[protein] + succinate + CO2. In terms of biological role, bifunctional enzyme that acts both as an endopeptidase and 2-oxoglutarate-dependent monooxygenase. May be involved in regulation of behavior and circadian rhythms. This chain is Jumonji C domain-containing protein 5, found in Drosophila melanogaster (Fruit fly).